Here is a 108-residue protein sequence, read N- to C-terminus: uncharacterized protein (108 aa).

Residues 64 to 84 traverse the membrane as a helical segment; sequence LFIIYYYYYLLICLSPHFFPI.

The protein resides in the membrane. This is an uncharacterized protein from Schizosaccharomyces pombe (strain 972 / ATCC 24843) (Fission yeast).